Reading from the N-terminus, the 227-residue chain is tRNA pseudouridine synthase B (227 aa).

The Nucleophile role is filled by D42.

It belongs to the pseudouridine synthase TruB family. Type 1 subfamily.

It carries out the reaction uridine(55) in tRNA = pseudouridine(55) in tRNA. Responsible for synthesis of pseudouridine from uracil-55 in the psi GC loop of transfer RNAs. This is tRNA pseudouridine synthase B from Ureaplasma parvum serovar 3 (strain ATCC 27815 / 27 / NCTC 11736).